Here is a 67-residue protein sequence, read N- to C-terminus: Large ribosomal subunit protein uL29 (67 aa).

The protein belongs to the universal ribosomal protein uL29 family.

This chain is Large ribosomal subunit protein uL29, found in Alkaliphilus metalliredigens (strain QYMF).